Here is a 209-residue protein sequence, read N- to C-terminus: Regulator of G-protein signaling 1 (209 aa).

A disordered region spans residues 19–42; the sequence is FSASPKDSKEHSHSLLDDKKQKKR. Residues 24-38 show a composition bias toward basic and acidic residues; that stretch reads KDSKEHSHSLLDDKK. The RGS domain maps to 85–200; the sequence is SLEKLLANQT…LKSNIYLNLL (116 aa).

As to quaternary structure, interacts with GNAI1 and GNAQ. In terms of tissue distribution, detected in spleen, lymph node and intestine.

It is found in the cell membrane. The protein localises to the cytoplasm. Its subcellular location is the cytosol. Its function is as follows. Regulates G protein-coupled receptor signaling cascades, including signaling downstream of the N-formylpeptide chemoattractant receptors and leukotriene receptors. Inhibits B cell chemotaxis toward CXCL12. Inhibits signal transduction by increasing the GTPase activity of G protein alpha subunits thereby driving them into their inactive GDP-bound form. The protein is Regulator of G-protein signaling 1 (Rgs1) of Mus musculus (Mouse).